Consider the following 283-residue polypeptide: Prepilin leader peptidase/N-methyltransferase (283 aa).

The next 7 helical transmembrane spans lie at 13–33 (VWLL…NVVI), 106–126 (WRYP…GLLW), 128–148 (PGLA…LAAI), 153–173 (QLLP…FNLA), 176–196 (FVPL…LWLI), 216–236 (LLAA…VLIA), and 259–279 (LAFG…NVLG).

Belongs to the peptidase A24 family.

Its subcellular location is the cell inner membrane. It catalyses the reaction Typically cleaves a -Gly-|-Phe- bond to release an N-terminal, basic peptide of 5-8 residues from type IV prepilin, and then N-methylates the new N-terminal amino group, the methyl donor being S-adenosyl-L-methionine.. Functionally, plays a role in type II pseudopili formation by proteolytically removing the leader sequence from substrate proteins and subsequently monomethylating the alpha-amino group of the newly exposed N-terminal phenylalanine. Substrates include proteins required for biogenesis of the type II general secretory apparatus. The polypeptide is Prepilin leader peptidase/N-methyltransferase (outO) (Dickeya chrysanthemi (Pectobacterium chrysanthemi)).